The following is an 875-amino-acid chain: Phosphoenolpyruvate carboxylase (875 aa).

Catalysis depends on residues His137 and Lys542.

The protein belongs to the PEPCase type 1 family. Mg(2+) serves as cofactor.

It carries out the reaction oxaloacetate + phosphate = phosphoenolpyruvate + hydrogencarbonate. Functionally, forms oxaloacetate, a four-carbon dicarboxylic acid source for the tricarboxylic acid cycle. In Pseudomonas putida (strain GB-1), this protein is Phosphoenolpyruvate carboxylase.